Reading from the N-terminus, the 346-residue chain is Acetylpolyamine amidohydrolase 1 (346 aa).

The active-site Proton donor/acceptor is histidine 161. Residues aspartate 197, histidine 199, and aspartate 286 each contribute to the Zn(2+) site.

Belongs to the histone deacetylase family. Homodimer. Zn(2+) serves as cofactor.

The enzyme catalyses N-acetylputrescine + H2O = putrescine + acetate. The catalysed reaction is N-acetylcadaverine + H2O = cadaverine + acetate. It carries out the reaction N(1)-acetylspermine + H2O = spermine + acetate. It catalyses the reaction N(1)-acetylspermidine + H2O = spermidine + acetate. It participates in amine and polyamine metabolism. Its function is as follows. Catalyzes the deacetylation of acetylated polyamines such as N-acetylputrescine, N-acetylcadaverine, N(1)-acetylspermine and N(1)-acetylspermidine. Plays an important role in the metabolism of acetylated polyamines in P.aeruginosa. Is involved in the degradation pathways of N-acetylputrescine and N-acetylcadaverine, that allow P.aeruginosa to utilize these acetylpolyamines as a carbon source under glucose starvation. In vitro, can also hydrolyze artificial trifluoroacetylated and acetylated lysine-derivatives. This is Acetylpolyamine amidohydrolase 1 from Pseudomonas aeruginosa (strain ATCC 15692 / DSM 22644 / CIP 104116 / JCM 14847 / LMG 12228 / 1C / PRS 101 / PAO1).